The primary structure comprises 244 residues: Probable histone-lysine N-methyltransferase set-23 (244 aa).

The Pre-SET domain maps to 25–86 (EGCNCEAECS…SCRNRVVQCG (62 aa)). Positions 27, 29, 33, 39, 41, 65, 69, 71, and 78 each coordinate Zn(2+). Residues 89–213 (KKLEIFSTCE…RGEELCYDYG (125 aa)) form the SET domain. S-adenosyl-L-methionine contacts are provided by residues 101-103 (KGF), Asp-141, Tyr-143, Arg-170, and 173-174 (NH). Positions 176, 225, 227, and 232 each coordinate Zn(2+). The Post-SET domain maps to 221–237 (NRKLCLCKSEKCRKYLP).

The protein belongs to the class V-like SAM-binding methyltransferase superfamily. Histone-lysine methyltransferase family. Suvar3-9 subfamily.

The protein resides in the nucleus. Its subcellular location is the chromosome. The catalysed reaction is L-lysyl-[histone] + S-adenosyl-L-methionine = N(6)-methyl-L-lysyl-[histone] + S-adenosyl-L-homocysteine + H(+). Its function is as follows. Probable histone methyltransferase. Required for embryonic development. This is Probable histone-lysine N-methyltransferase set-23 (set-23) from Caenorhabditis elegans.